Here is a 130-residue protein sequence, read N- to C-terminus: Ribosome-binding factor A (130 aa).

This sequence belongs to the RbfA family. Monomer. Binds 30S ribosomal subunits, but not 50S ribosomal subunits or 70S ribosomes.

It is found in the cytoplasm. One of several proteins that assist in the late maturation steps of the functional core of the 30S ribosomal subunit. Associates with free 30S ribosomal subunits (but not with 30S subunits that are part of 70S ribosomes or polysomes). Required for efficient processing of 16S rRNA. May interact with the 5'-terminal helix region of 16S rRNA. The sequence is that of Ribosome-binding factor A from Methylibium petroleiphilum (strain ATCC BAA-1232 / LMG 22953 / PM1).